The following is a 294-amino-acid chain: MALTGTDRVKRGMAEMQKGGVIMDVVNAEQAKIAEAAGAVAVMALERVPADIRAAGGVARMADPTVIEEVMNAVSIPVMAKVRIGHYVEARVLEALGVDYIDESEVLTPADEEFHIDKRQFTVPFVCGCRDLGEAARRIAEGASMLRTKGEPGTGNIVEAVRHMRKVNAQIRKVVNMSEDELVAEAKQLGAPVEVLREIKRLGRLPVVNFAAGGVATPADAALMMHLGADGVFVGSGIFKSENPEKYARAIVEATTHYEDYELIAHLSKGLGGAMRGIDIATLLPEHRMQERGW.

Residue Asp-24 participates in D-ribose 5-phosphate binding. Lys-81 serves as the catalytic Schiff-base intermediate with D-ribose 5-phosphate. Gly-153 provides a ligand contact to D-ribose 5-phosphate. Residue Arg-165 participates in D-glyceraldehyde 3-phosphate binding. D-ribose 5-phosphate-binding positions include Gly-214 and 235–236; that span reads GS.

This sequence belongs to the PdxS/SNZ family. In terms of assembly, homohexamer and homododecamer. In the presence of PdxT, forms a dodecamer of heterodimers.

The catalysed reaction is aldehydo-D-ribose 5-phosphate + D-glyceraldehyde 3-phosphate + L-glutamine = pyridoxal 5'-phosphate + L-glutamate + phosphate + 3 H2O + H(+). It functions in the pathway cofactor biosynthesis; pyridoxal 5'-phosphate biosynthesis. Its function is as follows. Catalyzes the formation of pyridoxal 5'-phosphate from ribose 5-phosphate (RBP), glyceraldehyde 3-phosphate (G3P) and ammonia. The ammonia is provided by the PdxT subunit. Can also use ribulose 5-phosphate and dihydroxyacetone phosphate as substrates, resulting from enzyme-catalyzed isomerization of RBP and G3P, respectively. The protein is Pyridoxal 5'-phosphate synthase subunit PdxS of Geobacillus kaustophilus (strain HTA426).